Reading from the N-terminus, the 83-residue chain is MSSGGLLLLLGLLTLWEVLTPVSSKDRPKFCELPADIGPCEDFTGAFHYSPREHECIEFIYGGCEGNANNFNTLEECESACAA.

Positions 1–24 (MSSGGLLLLLGLLTLWEVLTPVSS) are cleaved as a signal peptide. Positions 31 to 81 (CELPADIGPCEDFTGAFHYSPREHECIEFIYGGCEGNANNFNTLEECESAC) constitute a BPTI/Kunitz inhibitor domain. Intrachain disulfides connect C31–C81, C40–C64, and C56–C77.

It belongs to the venom Kunitz-type family. Expressed by the venom gland.

Its subcellular location is the secreted. In terms of biological role, serine protease inhibitor. The polypeptide is Kunitz-type serine protease inhibitor microlepidin-3 (Oxyuranus microlepidotus (Inland taipan)).